A 52-amino-acid chain; its full sequence is MAKFYKIWLIFDPRRVFVAQGVFLFLLAAMIHLVVLSSGLNWFEAAAAVGGQ.

Residues 1 to 15 (MAKFYKIWLIFDPRR) are Cytoplasmic-facing. The chain crosses the membrane as a helical span at residues 16 to 36 (VFVAQGVFLFLLAAMIHLVVL). Histidine 32 contacts a bacteriochlorophyll. Residues 37 to 52 (SSGLNWFEAAAAVGGQ) are Periplasmic-facing.

It belongs to the antenna complex alpha subunit family. The core complex is formed by different alpha and beta chains, binding bacteriochlorophyll molecules, and arranged most probably in tetrameric structures disposed around the reaction center. The non-pigmented gamma chains may constitute additional components.

The protein resides in the cell inner membrane. In terms of biological role, antenna complexes are light-harvesting systems, which transfer the excitation energy to the reaction centers. This Roseobacter denitrificans (strain ATCC 33942 / OCh 114) (Erythrobacter sp. (strain OCh 114)) protein is Light-harvesting protein B-870 alpha chain (pufA).